Consider the following 48-residue polypeptide: Sperm protamine R3 isoform 1 (48 aa).

Positions 1 to 29 (ARRRHSMKKKRKSVRRRKTRKNQRKRKNS) are enriched in basic residues. Positions 1–48 (ARRRHSMKKKRKSVRRRKTRKNQRKRKNSLGRSFKQHGFLKQPPRFRP) are disordered.

Testis.

It is found in the nucleus. The protein resides in the chromosome. Its function is as follows. Protamines substitute for histones in the chromatin of sperm during the haploid phase of spermatogenesis. They compact sperm DNA into a highly condensed, stable and inactive complex. The sequence is that of Sperm protamine R3 isoform 1 from Hydrolagus colliei (Spotted ratfish).